Consider the following 291-residue polypeptide: Glycine--tRNA ligase alpha subunit (291 aa).

The protein belongs to the class-II aminoacyl-tRNA synthetase family. Tetramer of two alpha and two beta subunits.

It localises to the cytoplasm. It carries out the reaction tRNA(Gly) + glycine + ATP = glycyl-tRNA(Gly) + AMP + diphosphate. The chain is Glycine--tRNA ligase alpha subunit from Rhizorhabdus wittichii (strain DSM 6014 / CCUG 31198 / JCM 15750 / NBRC 105917 / EY 4224 / RW1) (Sphingomonas wittichii).